The following is a 33-amino-acid chain: Pheromone biosynthesis-activating neuropeptide (33 aa).

Positions 1–33 (LADDMPATMADQEVYRPEPEQIDSRNKYFSPRL) are disordered. Over residues 13-26 (EVYRPEPEQIDSRN) the composition is skewed to basic and acidic residues. Position 33 is a leucine amide (Leu-33).

This sequence belongs to the pyrokinin family.

It localises to the secreted. Functionally, involved in the control of pheromone production in females. The sequence is that of Pheromone biosynthesis-activating neuropeptide from Lymantria dispar (Gypsy moth).